A 772-amino-acid polypeptide reads, in one-letter code: 1,4-alpha-glucan branching enzyme GlgB (772 aa).

Catalysis depends on Asp431, which acts as the Nucleophile. Glu484 functions as the Proton donor in the catalytic mechanism.

This sequence belongs to the glycosyl hydrolase 13 family. GlgB subfamily. As to quaternary structure, monomer.

The enzyme catalyses Transfers a segment of a (1-&gt;4)-alpha-D-glucan chain to a primary hydroxy group in a similar glucan chain.. It participates in glycan biosynthesis; glycogen biosynthesis. Catalyzes the formation of the alpha-1,6-glucosidic linkages in glycogen by scission of a 1,4-alpha-linked oligosaccharide from growing alpha-1,4-glucan chains and the subsequent attachment of the oligosaccharide to the alpha-1,6 position. The protein is 1,4-alpha-glucan branching enzyme GlgB of Synechococcus sp. (strain RCC307).